Reading from the N-terminus, the 735-residue chain is Ion-translocating oxidoreductase complex subunit C (735 aa).

2 4Fe-4S ferredoxin-type domains span residues 368-397 (MGAPQEEKSCIRCSACADACPADLLPQQLY) and 407-436 (KATAHHIADCIECGACAWVCPSNIPLVQYF). Cys377, Cys380, Cys383, Cys387, Cys416, Cys419, Cys422, and Cys426 together coordinate [4Fe-4S] cluster. The segment at 538 to 715 (KQAAHPMADS…PADPRKAAVA (178 aa)) is disordered. Low complexity predominate over residues 556–565 (KAAVEAAIAR).

Belongs to the 4Fe4S bacterial-type ferredoxin family. RnfC subfamily. The complex is composed of six subunits: RsxA, RsxB, RsxC, RsxD, RsxE and RsxG. [4Fe-4S] cluster serves as cofactor.

It localises to the cell inner membrane. In terms of biological role, part of a membrane-bound complex that couples electron transfer with translocation of ions across the membrane. Required to maintain the reduced state of SoxR. The chain is Ion-translocating oxidoreductase complex subunit C from Salmonella typhimurium (strain LT2 / SGSC1412 / ATCC 700720).